We begin with the raw amino-acid sequence, 277 residues long: MSDQEAPLRNGVEHKIFEVLPFVDDDYGGVIVEMKTPMDTKNFVAALRDSFEQWRLQGKKGVWLNLPLSHVNLVEPAVKEGFRYHHAEPTYLMLVYWIPEAESTIPLNASHRVRVGAVVLNHNKEEKYGSLCGSGIWKIPTGVVDEGEEIFAAAIREVKEETGIDTEFLEILAFCQTHESFFAKSDLFFVCLLRPTSFDIQKQDLEIEAAQWMRFEDSASQPITHKNDLFKDIHHICSMKMEKSYSGFSKKPITTFFDDKLGYLYLNKQEDMEQPIS.

In terms of domain architecture, Nudix hydrolase spans W97–H235. Residues G142–G163 carry the Nudix box motif. Residues E157 and E161 each coordinate Mg(2+).

The protein belongs to the Nudix hydrolase family. The cofactor is Mg(2+). It depends on Mn(2+) as a cofactor. As to expression, expressed in roots, stems and, at lower level, leaves.

The enzyme catalyses ADP-D-ribose + H2O = D-ribose 5-phosphate + AMP + 2 H(+). The catalysed reaction is NAD(+) + H2O = beta-nicotinamide D-ribonucleotide + AMP + 2 H(+). It carries out the reaction NADH + H2O = reduced beta-nicotinamide D-ribonucleotide + AMP + 2 H(+). In terms of biological role, may mediate the hydrolysis of some nucleoside diphosphate derivatives. In vitro, uses both ADP-ribose and NADH as substrates; however the relevance of such substrates in vivo is unclear. This Arabidopsis thaliana (Mouse-ear cress) protein is Nudix hydrolase 10 (NUDT10).